The primary structure comprises 674 residues: 1,4-alpha-glucan branching enzyme GlgB 1 (674 aa).

Asp-336 acts as the Nucleophile in catalysis. The active-site Proton donor is Glu-389.

It belongs to the glycosyl hydrolase 13 family. GlgB subfamily. In terms of assembly, monomer.

The enzyme catalyses Transfers a segment of a (1-&gt;4)-alpha-D-glucan chain to a primary hydroxy group in a similar glucan chain.. The protein operates within glycan biosynthesis; glycogen biosynthesis. Its function is as follows. Catalyzes the formation of the alpha-1,6-glucosidic linkages in glycogen by scission of a 1,4-alpha-linked oligosaccharide from growing alpha-1,4-glucan chains and the subsequent attachment of the oligosaccharide to the alpha-1,6 position. The sequence is that of 1,4-alpha-glucan branching enzyme GlgB 1 (glgB1) from Clostridium perfringens (strain 13 / Type A).